The sequence spans 446 residues: 3-phosphoshikimate 1-carboxyvinyltransferase (446 aa).

The interval 1 to 20 is disordered; the sequence is MIMAKPLSSRRAAPLAGSAP. 3-phosphoshikimate-binding residues include Lys-25, Ser-26, and Arg-30. Residue Lys-25 coordinates phosphoenolpyruvate. Phosphoenolpyruvate is bound by residues Gly-98 and Arg-126. Residues Ser-171, Gln-173, Asp-324, and Lys-351 each coordinate 3-phosphoshikimate. Residue Gln-173 coordinates phosphoenolpyruvate. Residue Asp-324 is the Proton acceptor of the active site. Residues Arg-355 and Arg-399 each coordinate phosphoenolpyruvate.

This sequence belongs to the EPSP synthase family. As to quaternary structure, monomer.

It localises to the cytoplasm. It catalyses the reaction 3-phosphoshikimate + phosphoenolpyruvate = 5-O-(1-carboxyvinyl)-3-phosphoshikimate + phosphate. The protein operates within metabolic intermediate biosynthesis; chorismate biosynthesis; chorismate from D-erythrose 4-phosphate and phosphoenolpyruvate: step 6/7. Its function is as follows. Catalyzes the transfer of the enolpyruvyl moiety of phosphoenolpyruvate (PEP) to the 5-hydroxyl of shikimate-3-phosphate (S3P) to produce enolpyruvyl shikimate-3-phosphate and inorganic phosphate. The protein is 3-phosphoshikimate 1-carboxyvinyltransferase of Paramagnetospirillum magneticum (strain ATCC 700264 / AMB-1) (Magnetospirillum magneticum).